The primary structure comprises 378 residues: UDP-4-amino-4-deoxy-L-arabinose--oxoglutarate aminotransferase (378 aa).

Lysine 182 carries the post-translational modification N6-(pyridoxal phosphate)lysine.

It belongs to the DegT/DnrJ/EryC1 family. ArnB subfamily. As to quaternary structure, homodimer. Requires pyridoxal 5'-phosphate as cofactor.

It catalyses the reaction UDP-4-amino-4-deoxy-beta-L-arabinose + 2-oxoglutarate = UDP-beta-L-threo-pentopyranos-4-ulose + L-glutamate. Its pathway is nucleotide-sugar biosynthesis; UDP-4-deoxy-4-formamido-beta-L-arabinose biosynthesis; UDP-4-deoxy-4-formamido-beta-L-arabinose from UDP-alpha-D-glucuronate: step 2/3. The protein operates within bacterial outer membrane biogenesis; lipopolysaccharide biosynthesis. In terms of biological role, catalyzes the conversion of UDP-4-keto-arabinose (UDP-Ara4O) to UDP-4-amino-4-deoxy-L-arabinose (UDP-L-Ara4N). The modified arabinose is attached to lipid A and is required for resistance to polymyxin and cationic antimicrobial peptides. The protein is UDP-4-amino-4-deoxy-L-arabinose--oxoglutarate aminotransferase of Aeromonas salmonicida (strain A449).